A 208-amino-acid chain; its full sequence is Uracil phosphoribosyltransferase (208 aa).

5-phospho-alpha-D-ribose 1-diphosphate-binding positions include Arg-78, Arg-103, and 130-138; that span reads DPMLATGGT. Uracil is bound by residues Ile-193 and 198-200; that span reads GDA. Asp-199 provides a ligand contact to 5-phospho-alpha-D-ribose 1-diphosphate.

This sequence belongs to the UPRTase family. Mg(2+) serves as cofactor.

It carries out the reaction UMP + diphosphate = 5-phospho-alpha-D-ribose 1-diphosphate + uracil. Its pathway is pyrimidine metabolism; UMP biosynthesis via salvage pathway; UMP from uracil: step 1/1. Its activity is regulated as follows. Allosterically activated by GTP. Catalyzes the conversion of uracil and 5-phospho-alpha-D-ribose 1-diphosphate (PRPP) to UMP and diphosphate. The sequence is that of Uracil phosphoribosyltransferase from Nitratidesulfovibrio vulgaris (strain ATCC 29579 / DSM 644 / CCUG 34227 / NCIMB 8303 / VKM B-1760 / Hildenborough) (Desulfovibrio vulgaris).